The following is a 305-amino-acid chain: Cytochrome c biogenesis protein CcsA (305 aa).

8 helical membrane-spanning segments follow: residues V4–W24, S32–L52, G58–L78, I91–L111, V136–V156, T212–N232, T246–L263, and V275–I295.

The protein belongs to the CcmF/CycK/Ccl1/NrfE/CcsA family. May interact with ccs1.

Its subcellular location is the cellular thylakoid membrane. Required during biogenesis of c-type cytochromes (cytochrome c6 and cytochrome f) at the step of heme attachment. In Synechococcus sp. (strain CC9311), this protein is Cytochrome c biogenesis protein CcsA.